The primary structure comprises 882 residues: Cadherin-1 (882 aa).

The signal sequence occupies residues 1 to 22 (MGPWSRSLSALLLLLQVSSWLC). A propeptide spanning residues 23–154 (QEPEPCHPGF…SSSGLRRRKR (132 aa)) is cleaved from the precursor. N-linked (GlcNAc...) asparagine glycosylation occurs at N144. Cadherin domains follow at residues 155–262 (DWVI…KPEF), 263–375 (TQEV…PPVF), 376–486 (NPTT…APIF), 487–593 (VPPE…DNAP), and 594–697 (IPEP…VCKK). The Extracellular segment spans residues 155–709 (DWVIPPISCP…PIEAGLQIPA (555 aa)). Position 257 (D257) interacts with Ca(2+). An O-linked (Man...) serine glycan is attached at S280. T285 is a glycosylation site (O-linked (Man...) threonine). Residue D288 coordinates Ca(2+). T358, T470, T472, and T509 each carry an O-linked (Man...) threonine glycan. The N-linked (GlcNAc...) asparagine glycan is linked to N558. 3 O-linked (Man...) threonine glycosylation sites follow: T576, T578, and T580. An N-linked (GlcNAc...) asparagine glycan is attached at N637. A helical transmembrane segment spans residues 710 to 730 (ILGILGGILALLILILLLLLF). Residues 731 to 882 (LRRRAVVKEP…ADMYGGGEDD (152 aa)) are Cytoplasmic-facing. The disordered stretch occupies residues 747 to 767 (DTRDNVYYYDEEGGGEEDQDF). Y753, Y754, and Y755 each carry phosphotyrosine; by SRC. Acidic residues predominate over residues 755 to 767 (YDEEGGGEEDQDF). A required for binding CTNND1 and PSEN1 region spans residues 758-769 (EGGGEEDQDFDL). A phosphoserine mark is found at S770, S793, S838, S840, and S846. Positions 811–882 (IDENLKAADT…ADMYGGGEDD (72 aa)) are required for binding alpha, beta and gamma catenins.

As to quaternary structure, homodimer; disulfide-linked. Component of an E-cadherin/ catenin adhesion complex composed of at least E-cadherin/CDH1, beta-catenin/CTNNB1 or gamma-catenin/JUP, and potentially alpha-catenin/CTNNA1; the complex is located to adherens junctions. Found in a complex composed of CDH1, RAP1A and PKP3; PKP3 acts as a scaffold protein within the complex, the complex is required for CDH1 localization to mature desmosome cell junctions. Interacts with the TRPV4 and CTNNB1 complex. Interacts with CTNND1. The stable association of CTNNA1 is controversial as CTNNA1 was shown not to bind to F-actin when assembled in the complex. Alternatively, the CTNNA1-containing complex may be linked to F-actin by other proteins such as LIMA1. Interaction with PSEN1, cleaves CDH1 resulting in the disassociation of cadherin-based adherens junctions (CAJs). Interacts with AJAP1 and DLGAP5. Interacts with TBC1D2. Interacts with LIMA1. Interacts with CAV1. Interacts with PIP5K1C. Interacts with RAB8B. Interacts with DDR1; this stabilizes CDH1 at the cell surface and inhibits its internalization. Interacts with RAPGEF2. Interacts with KLRG1. Forms a ternary complex composed of ADAM10, CADH1 and EPHA4; within the complex, CADH1 is cleaved by ADAM10 which disrupts adherens junctions. Interacts with SPEF1. Interacts with CTNNB1 and PKP2. Interacts with AMOTL2; the interaction may facilitate binding of radial actin fibers to cell junction complexes. Interacts with DSG3; the interaction is required for CDH1 localization to developing adherens junctions. Post-translationally, during apoptosis or with calcium influx, cleaved by a membrane-bound metalloproteinase (ADAM10), PS1/gamma-secretase and caspase-3. Processing by the metalloproteinase, induced by calcium influx, causes disruption of cell-cell adhesion and the subsequent release of beta-catenin into the cytoplasm. The residual membrane-tethered cleavage product is rapidly degraded via an intracellular proteolytic pathway. Cleavage by caspase-3 releases the cytoplasmic tail resulting in disintegration of the actin microfilament system. The gamma-secretase-mediated cleavage promotes disassembly of adherens junctions. During development of the cochlear organ of Corti, cleavage by ADAM10 at adherens junctions promotes pillar cell separation. N-glycosylation at Asn-637 is essential for expression, folding and trafficking. Addition of bisecting N-acetylglucosamine by MGAT3 modulates its cell membrane location. In terms of processing, ubiquitinated by a SCF complex containing SKP2, which requires prior phosphorylation by CK1/CSNK1A1. Ubiquitinated by CBLL1/HAKAI, requires prior phosphorylation at Tyr-754. Post-translationally, O-glycosylated. O-manosylated by TMTC1, TMTC2, TMTC3 or TMTC4. Thr-285 and Thr-509 are O-mannosylated by TMTC2 or TMTC4 but not TMTC1 or TMTC3.

The protein localises to the cell junction. Its subcellular location is the adherens junction. It localises to the cell membrane. The protein resides in the endosome. It is found in the golgi apparatus. The protein localises to the trans-Golgi network. Its subcellular location is the cytoplasm. It localises to the desmosome. Cadherins are calcium-dependent cell adhesion proteins. They preferentially interact with themselves in a homophilic manner in connecting cells; cadherins may thus contribute to the sorting of heterogeneous cell types. CDH1 is involved in mechanisms regulating cell-cell adhesions, mobility and proliferation of epithelial cells. Promotes organization of radial actin fiber structure and cellular response to contractile forces, via its interaction with AMOTL2 which facilitates anchoring of radial actin fibers to CDH1 junction complexes at the cell membrane. Plays a role in the early stages of desmosome cell-cell junction formation via facilitating the recruitment of DSG2 and DSP to desmosome plaques. Has a potent invasive suppressor role. It is a ligand for integrin alpha-E/beta-7. Its function is as follows. E-Cad/CTF2 promotes non-amyloidogenic degradation of Abeta precursors. Has a strong inhibitory effect on APP C99 and C83 production. The chain is Cadherin-1 (CDH1) from Pongo abelii (Sumatran orangutan).